The following is a 217-amino-acid chain: Holliday junction branch migration complex subunit RuvA (217 aa).

Positions 1-64 (MIGKLTGILD…EDAIRLFGFE (64 aa)) are domain I. The domain II stretch occupies residues 65–145 (TKVEQDWFCL…NAPHQSMPHF (81 aa)). The interval 146-160 (VSYSSETSSQAGTQH) is flexible linker. The tract at residues 161–217 (TGHQHSMDALAALTKLGFERDQATHALQEAIKAFEGETPSSALLIRHSLKLLSSHLK) is domain III.

This sequence belongs to the RuvA family. Homotetramer. Forms an RuvA(8)-RuvB(12)-Holliday junction (HJ) complex. HJ DNA is sandwiched between 2 RuvA tetramers; dsDNA enters through RuvA and exits via RuvB. An RuvB hexamer assembles on each DNA strand where it exits the tetramer. Each RuvB hexamer is contacted by two RuvA subunits (via domain III) on 2 adjacent RuvB subunits; this complex drives branch migration. In the full resolvosome a probable DNA-RuvA(4)-RuvB(12)-RuvC(2) complex forms which resolves the HJ.

It is found in the cytoplasm. In terms of biological role, the RuvA-RuvB-RuvC complex processes Holliday junction (HJ) DNA during genetic recombination and DNA repair, while the RuvA-RuvB complex plays an important role in the rescue of blocked DNA replication forks via replication fork reversal (RFR). RuvA specifically binds to HJ cruciform DNA, conferring on it an open structure. The RuvB hexamer acts as an ATP-dependent pump, pulling dsDNA into and through the RuvAB complex. HJ branch migration allows RuvC to scan DNA until it finds its consensus sequence, where it cleaves and resolves the cruciform DNA. This is Holliday junction branch migration complex subunit RuvA from Bartonella bacilliformis (strain ATCC 35685 / KC583 / Herrer 020/F12,63).